Reading from the N-terminus, the 413-residue chain is [Pyruvate dehydrogenase (acetyl-transferring)] kinase, mitochondrial (413 aa).

The region spanning 137 to 369 is the Histidine kinase domain; the sequence is MKENEGGQVD…DAIIYLKALS (233 aa). Residues 253-260, D294, 313-314, and 330-335 contribute to the ATP site; these read ELFKNSMR, ST, and GYGYGL.

Belongs to the PDK/BCKDK protein kinase family.

It is found in the mitochondrion matrix. It catalyses the reaction L-seryl-[pyruvate dehydrogenase E1 alpha subunit] + ATP = O-phospho-L-seryl-[pyruvate dehydrogenase E1 alpha subunit] + ADP + H(+). Its function is as follows. Inhibits the mitochondrial pyruvate dehydrogenase complex by phosphorylation of the E1 alpha subunit, thus contributing to the regulation of glucose metabolism. The sequence is that of [Pyruvate dehydrogenase (acetyl-transferring)] kinase, mitochondrial (Pdk) from Drosophila melanogaster (Fruit fly).